Here is a 264-residue protein sequence, read N- to C-terminus: H-2 class II histocompatibility antigen, E-Q beta chain (264 aa).

An N-terminal signal peptide occupies residues 1–26 (MVWLPRVPCVAAVILLLTVLSPPVAL). Residues 27-121 (VRDSRPWFLE…IFDNFLVRRR (95 aa)) form a beta-1 region. Residues 27–225 (VRDSRPWFLE…KAQSTSAQNK (199 aa)) are Extracellular-facing. 2 cysteine pairs are disulfide-bonded: Cys38–Cys106 and Cys144–Cys200. N-linked (GlcNAc...) asparagine glycosylation occurs at Asn46. The segment at 122 to 225 (VEPTVTVYPT…KAQSTSAQNK (104 aa)) is beta-2. The region spanning 124 to 214 (PTVTVYPTKT…PSLTDPVTVE (91 aa)) is the Ig-like C1-type domain. The helical transmembrane segment at 226-246 (MLSGVGGFVLGLLFLGAGLFI) threads the bilayer. At 247–264 (YFRNQKGQSGLQPTGLLS) the chain is on the cytoplasmic side.

The protein belongs to the MHC class II family.

The protein resides in the membrane. This is H-2 class II histocompatibility antigen, E-Q beta chain from Mus musculus (Mouse).